The following is a 691-amino-acid chain: F-box/LRR-repeat protein 5 (691 aa).

Residues 1-159 (MAPFPEEVDV…IKKKVIAQHC (159 aa)) are hemerythrin-like. Fe(3+) is bound by residues His15, His57, Glu58, Glu61, His80, His126, and Glu130. Residues 202–248 (STGITHLPPEVMLSIFSYLNPQELCRCSQVSMKWSQLTKTGSLWKHL) form the F-box domain. 7 LRR repeats span residues 340 to 364 (SSAVSSKMVRQILELCPNLEHLDLT), 365 to 392 (QTDISDSAFDSWSWLGCCQSLRHLDLSG), 393 to 418 (CEKITDVALEKISRALGILTSHQSGF), 479 to 508 (LWMLDAEDLADIEDTVEWRHRNVESLCVVE), 576 to 607 (TRLPRGKDLIYFGSEKSDQETGRVLLFLSLSG), 608 to 635 (CYQITDHGLRVLTLGGGLPYLEHLNLSG), and 636 to 661 (CLTITGAGLQDLVSACPSLNDEYFYY). [2Fe-2S] cluster-binding residues include Cys662, Cys676, Cys686, and Cys687.

Part of a SCF (SKP1-cullin-F-box) protein ligase complex. Interacts with ACO1/IRP1, IREB2/IRP2; the interaction depends on the [2Fe-2S] cluster. Interacts with DCTN1/p150-glued. It depends on [2Fe-2S] cluster as a cofactor. Post-translationally, polybiquitinated upon iron and oxygen depletion, leading to its degradation by the proteasome. Ubiquitination is regulated by the hemerythrin-like region that acts as an oxygen and iron sensor. Undergoes constitutive ubiquitin-dependent degradation at the steady state by HERC2.

Its subcellular location is the cytoplasm. The protein resides in the perinuclear region. The protein localises to the nucleus. Its pathway is protein modification; protein ubiquitination. Its activity is regulated as follows. An iron-sulfur cluster promotes IRP2 polyubiquitination and degradation in response to both iron and oxygen concentrations. Functionally, component of some SCF (SKP1-cullin-F-box) protein ligase complex that plays a central role in iron homeostasis by promoting the ubiquitination and subsequent degradation of IREB2/IRP2. The C-terminal domain of FBXL5 contains a redox-sensitive [2Fe-2S] cluster that, upon oxidation, promotes binding to IRP2 to effect its oxygen-dependent degradation. Under iron deficiency conditions, the N-terminal hemerythrin-like (Hr) region, which contains a diiron metal center, cannot bind iron and undergoes conformational changes that destabilize the FBXL5 protein and cause its ubiquitination and degradation. When intracellular iron levels start rising, the Hr region is stabilized. Additional increases in iron levels facilitate the assembly and incorporation of a redox active [2Fe-2S] cluster in the C-terminal domain. Only when oxygen level is high enough to maintain the cluster in its oxidized state can FBXL5 recruit IRP2 as a substrate for polyubiquination and degradation. Promotes ubiquitination and subsequent degradation of the dynactin complex component DCTN1. Within the nucleus, promotes the ubiquitination of SNAI1; preventing its interaction with DNA and promoting its degradation. Negatively regulates DNA damage response by mediating the ubiquitin-proteasome degradation of the DNA repair protein NABP2. In Pongo abelii (Sumatran orangutan), this protein is F-box/LRR-repeat protein 5 (FBXL5).